A 428-amino-acid chain; its full sequence is MKTSLFKSLYFQVLTAIAIGILLGHFYPEIGEQMKPLGDGFVKLIKMIIAPVIFCTVVTGIAGMESMKAVGRTGAVALLYFEIVSTIALIIGLIIVNVVQPGAGMNVDPATLDAKAVAVYADQAKDQGIVAFIMDVIPASVIGAFASGNILQVLLFAVLFGFALHRLGSKGQLIFNVIESFSQVIFGIINMIMRLAPIGAFGAMAFTIGKYGVGTLVQLGQLIICFYITCILFVVLVLGSIAKATGFSIFKFIRYIREELLIVLGTSSSESALPRMLDKMEKLGCRKSVVGLVIPTGYSFNLDGTSIYLTMAAVFIAQATNSQMDIVHQITLLIVLLLSSKGAAGVTGSGFIVLAATLSAVGHLPVAGLALILGIDRFMSEARALTNLVGNGVATIVVAKWVKELDHKKLDDALNNRAPDGKTHELSS.

Transmembrane regions (helical) follow at residues 5 to 27 (LFKS…GHFY), 47 to 64 (MIIA…IAGM), 77 to 99 (ALLY…VNVV), 141 to 163 (VIGA…FGFA), 184 to 206 (VIFG…AMAF), 219 to 241 (LGQL…LGSI), 326 to 348 (IVHQ…GVTG), and 352 to 374 (IVLA…LILG).

This sequence belongs to the dicarboxylate/amino acid:cation symporter (DAACS) (TC 2.A.23) family.

The protein resides in the cell inner membrane. In terms of biological role, responsible for the aerobic transport of the dicarboxylates fumarate and malate and to a lesser extent succinate, from the periplasm across the inner membrane. The polypeptide is Aerobic C4-dicarboxylate transport protein (Escherichia coli O157:H7).